Reading from the N-terminus, the 222-residue chain is uncharacterized protein (222 aa).

A helical transmembrane segment spans residues 7–26 (ICLVSLICISGIYFGYQYYQ). One can recognise an SPOR domain in the interval 139 to 222 (CRSNAGYKVQ…AYNKQSCVLK (84 aa)).

It is found in the membrane. This is an uncharacterized protein from Rickettsia prowazekii (strain Madrid E).